The primary structure comprises 167 residues: Single-stranded DNA-binding protein 2 (167 aa).

The region spanning 1-104 is the SSB domain; it reads MLNRVVLVGR…VVCDSVQFLE (104 aa). A disordered region spans residues 107–167; the sequence is NAQQNGGQRQ…IDISDDDLPF (61 aa). 2 stretches are compositionally biased toward low complexity: residues 109–118 and 132–147; these read QQNGGQRQQN and SGQN…TKQS. Positions 162-167 match the Important for interaction with partner proteins motif; the sequence is DDDLPF.

Homotetramer.

Functionally, plays an important role in DNA replication, recombination and repair. Binds to ssDNA and to an array of partner proteins to recruit them to their sites of action during DNA metabolism. The protein is Single-stranded DNA-binding protein 2 (ssb2) of Staphylococcus aureus (strain MSSA476).